We begin with the raw amino-acid sequence, 282 residues long: Large ribosomal subunit protein uL2 (282 aa).

The segment at 215–282 is disordered; the sequence is RHKGIRPTVR…IIRSRKETKK (68 aa). The segment covering 263 to 282 has biased composition (basic residues); sequence RNPKKPSTKLIIRSRKETKK.

Belongs to the universal ribosomal protein uL2 family. As to quaternary structure, part of the 50S ribosomal subunit. Forms a bridge to the 30S subunit in the 70S ribosome.

One of the primary rRNA binding proteins. Required for association of the 30S and 50S subunits to form the 70S ribosome, for tRNA binding and peptide bond formation. It has been suggested to have peptidyltransferase activity; this is somewhat controversial. Makes several contacts with the 16S rRNA in the 70S ribosome. The protein is Large ribosomal subunit protein uL2 of Mesomycoplasma hyopneumoniae (strain J / ATCC 25934 / NCTC 10110) (Mycoplasma hyopneumoniae).